We begin with the raw amino-acid sequence, 461 residues long: Juvenile hormone epoxide hydrolase (461 aa).

Residues Leu-4–Leu-24 form a helical membrane-spanning segment. Residue Asp-227 is the Nucleophile of the active site. Tyr-373 acts as the Proton donor in catalysis. His-430 serves as the catalytic Proton acceptor.

It belongs to the peptidase S33 family. Homodimer. As to expression, expressed in fat body, foregut and midgut but not in brain, subesophageal ganglia or silk gland of larvae on day 1 of fifth instar.

The protein resides in the microsome membrane. The protein localises to the endoplasmic reticulum membrane. The enzyme catalyses cis-stilbene oxide + H2O = (1R,2R)-hydrobenzoin. It carries out the reaction 1-(4-methoxyphenyl)-N-methyl-N-[(3-methyloxetan-3-yl)methyl]methanamine + H2O = 2-{[(4-methoxybenzyl)(methyl)amino]methyl}-2-methylpropane-1,3-diol. Catalyzes juvenile hormone hydrolysis. Degrades juvenile hormone III (JH III) about 3 times and 5 times slower than juvenile hormone I (JH I) and II (JH II), respectively. Degrades cis-stilbene oxide and trans-stilbene oxide about 18 and 43 times slower than JH III, respectively. This Bombyx mori (Silk moth) protein is Juvenile hormone epoxide hydrolase.